A 378-amino-acid polypeptide reads, in one-letter code: Chaperone protein DnaJ (378 aa).

The 65-residue stretch at 5–69 (EYYDRLGVSK…QKRAAYDQYG (65 aa)) folds into the J domain. Residues 134 to 216 (GVEKEVSYNR…CHGTGHEKQA (83 aa)) form a CR-type zinc finger. The Zn(2+) site is built by C147, C150, C164, C167, C190, C193, C204, and C207. CXXCXGXG motif repeat units lie at residues 147–154 (CGTCLGSG), 164–171 (CRKCHGSG), 190–197 (CDICHGSG), and 204–211 (CQTCHGTG).

This sequence belongs to the DnaJ family. As to quaternary structure, homodimer. It depends on Zn(2+) as a cofactor.

The protein resides in the cytoplasm. Its function is as follows. Participates actively in the response to hyperosmotic and heat shock by preventing the aggregation of stress-denatured proteins and by disaggregating proteins, also in an autonomous, DnaK-independent fashion. Unfolded proteins bind initially to DnaJ; upon interaction with the DnaJ-bound protein, DnaK hydrolyzes its bound ATP, resulting in the formation of a stable complex. GrpE releases ADP from DnaK; ATP binding to DnaK triggers the release of the substrate protein, thus completing the reaction cycle. Several rounds of ATP-dependent interactions between DnaJ, DnaK and GrpE are required for fully efficient folding. Also involved, together with DnaK and GrpE, in the DNA replication of plasmids through activation of initiation proteins. This chain is Chaperone protein DnaJ, found in Streptococcus pyogenes serotype M6 (strain ATCC BAA-946 / MGAS10394).